A 209-amino-acid chain; its full sequence is Superoxide dismutase [Mn/Fe] (209 aa).

4 residues coordinate Fe(3+): His-38, His-90, Asp-172, and His-176. Mn(2+) contacts are provided by His-38, His-90, Asp-172, and His-176.

The protein belongs to the iron/manganese superoxide dismutase family. It depends on Mn(2+) as a cofactor. The cofactor is Fe(3+).

It catalyses the reaction 2 superoxide + 2 H(+) = H2O2 + O2. Its function is as follows. Destroys superoxide anion radicals which are normally produced within the cells and which are toxic to biological systems. Catalyzes the dismutation of superoxide anion radicals into O2 and H2O2 by successive reduction and oxidation of the transition metal ion at the active site. This Rickettsia bellii (strain RML369-C) protein is Superoxide dismutase [Mn/Fe] (sodB).